A 181-amino-acid chain; its full sequence is ATP-dependent protease subunit HslV (181 aa).

The active site involves T5. The Na(+) site is built by S162, C165, and T168.

The protein belongs to the peptidase T1B family. HslV subfamily. As to quaternary structure, a double ring-shaped homohexamer of HslV is capped on each side by a ring-shaped HslU homohexamer. The assembly of the HslU/HslV complex is dependent on binding of ATP.

The protein localises to the cytoplasm. The catalysed reaction is ATP-dependent cleavage of peptide bonds with broad specificity.. Allosterically activated by HslU binding. Functionally, protease subunit of a proteasome-like degradation complex believed to be a general protein degrading machinery. This Campylobacter hominis (strain ATCC BAA-381 / DSM 21671 / CCUG 45161 / LMG 19568 / NCTC 13146 / CH001A) protein is ATP-dependent protease subunit HslV.